The chain runs to 508 residues: Photosystem II CP47 reaction center protein (508 aa).

6 helical membrane passes run 21-36 (SVHIMHTALVAGWAGS), 101-115 (IMFSGLCFLAAIWHW), 140-156 (GIHLFLAGVACFGFGAF), 203-218 (IAAGTLGILAGLFHLS), 237-252 (VLSSSIAAVFFAAFVV), and 457-472 (SFALLFFFGHIWHGAR).

Belongs to the PsbB/PsbC family. PsbB subfamily. PSII is composed of 1 copy each of membrane proteins PsbA, PsbB, PsbC, PsbD, PsbE, PsbF, PsbH, PsbI, PsbJ, PsbK, PsbL, PsbM, PsbT, PsbX, PsbY, PsbZ, Psb30/Ycf12, at least 3 peripheral proteins of the oxygen-evolving complex and a large number of cofactors. It forms dimeric complexes. Binds multiple chlorophylls. PSII binds additional chlorophylls, carotenoids and specific lipids. serves as cofactor.

Its subcellular location is the plastid. It localises to the chloroplast thylakoid membrane. In terms of biological role, one of the components of the core complex of photosystem II (PSII). It binds chlorophyll and helps catalyze the primary light-induced photochemical processes of PSII. PSII is a light-driven water:plastoquinone oxidoreductase, using light energy to abstract electrons from H(2)O, generating O(2) and a proton gradient subsequently used for ATP formation. The polypeptide is Photosystem II CP47 reaction center protein (Guizotia abyssinica (Niger)).